Here is a 1278-residue protein sequence, read N- to C-terminus: Alpha-glucan water dikinase 2 (1278 aa).

An N-terminal signal peptide occupies residues 1–23; the sequence is MATSKSQQFQLIEGMELQITVTG. The active-site Tele-phosphohistidine intermediate is histidine 886.

The protein belongs to the PEP-utilizing enzyme family. In terms of assembly, homodimer. Mg(2+) is required as a cofactor.

The catalysed reaction is [(1-&gt;4)-alpha-D-glucosyl](n) + n ATP + n H2O = [(1-&gt;4)-6-phospho-alpha-D-glucosyl](n) + n AMP + n phosphate + 2n H(+). Its function is as follows. Mediates the incorporation of phosphate into alpha-glucan, mostly at the C-6 position of glucose units. The protein is Alpha-glucan water dikinase 2 (GWD2) of Arabidopsis thaliana (Mouse-ear cress).